Here is a 442-residue protein sequence, read N- to C-terminus: MRVLTPSLYIYAFFIFCVRFKCGNRTTVASAIRASYDMPPKELRVGDMLKKTSQPNCNYRTRGKCRKFFFVWKLDKMRDAHLGVQAKRRKNHLRSGSATYEASLGEHQLKGKRKESATNVEKEKKEKEQQEERLPVPKVGNKMPEKKPDWFHVPAPTGKKYNKLKEDLKKLKLHTVCEEAQCPNIGECWNIGTATIMLLGDTCTRGCKFCSIKTSSKPLAPDANEPFNTAKAICEWDINYVVLTSVDRDDLPDGGASHFAKTIELIKFSRPEILIECLVSDFQGNVDSIRKLANSGMEVYAHNIETVRRLQKFVRDRRANYEQSLRVLKIAKEINPMLYTKTSIMLGLGETKEEVLEAMSDVRQHNIDVITFGQYLRPTKNHLNVVEYVSPQMFDFYKEEGMKMGFKYIASGPLVRSSYKAGEYFMKSLVEQRRGAKTHAQG.

The N-terminal stretch at 1–23 is a signal peptide; that stretch reads MRVLTPSLYIYAFFIFCVRFKCG. The disordered stretch occupies residues 104 to 154; it reads LGEHQLKGKRKESATNVEKEKKEKEQQEERLPVPKVGNKMPEKKPDWFHVP. A compositionally biased stretch (basic and acidic residues) spans 114–135; the sequence is KESATNVEKEKKEKEQQEERLP. Residues C177, C182, C188, C203, C207, C210, and S418 each coordinate [4Fe-4S] cluster. The Radical SAM core domain maps to 189–407; sequence WNIGTATIML…KEEGMKMGFK (219 aa).

This sequence belongs to the radical SAM superfamily. Lipoyl synthase family. Requires [4Fe-4S] cluster as cofactor.

The protein localises to the plastid. It is found in the apicoplast. It carries out the reaction [[Fe-S] cluster scaffold protein carrying a second [4Fe-4S](2+) cluster] + N(6)-octanoyl-L-lysyl-[protein] + 2 oxidized [2Fe-2S]-[ferredoxin] + 2 S-adenosyl-L-methionine + 4 H(+) = [[Fe-S] cluster scaffold protein] + N(6)-[(R)-dihydrolipoyl]-L-lysyl-[protein] + 4 Fe(3+) + 2 hydrogen sulfide + 2 5'-deoxyadenosine + 2 L-methionine + 2 reduced [2Fe-2S]-[ferredoxin]. It functions in the pathway protein modification; protein lipoylation via endogenous pathway; protein N(6)-(lipoyl)lysine from octanoyl-[acyl-carrier-protein]: step 2/2. Catalyzes the radical-mediated insertion of two sulfur atoms into the C-6 and C-8 positions of the octanoyl moiety bound to the lipoyl domains of lipoate-dependent enzymes, thereby converting the octanoylated domains into lipoylated derivatives. The chain is Lipoyl synthase, apicoplast from Plasmodium knowlesi (strain H).